The primary structure comprises 442 residues: D-galactonate dehydratase family member SSLG_02014 (442 aa).

His-161 is a substrate binding site. Tyr-197 functions as the Proton donor/acceptor in the catalytic mechanism. Mg(2+) is bound at residue Asp-246. His-248 acts as the Proton donor/acceptor in catalysis. Residues Glu-272 and Glu-298 each coordinate Mg(2+). Glu-298, Arg-319, His-348, Asp-352, and Glu-375 together coordinate substrate.

This sequence belongs to the mandelate racemase/muconate lactonizing enzyme family. GalD subfamily. Requires Mg(2+) as cofactor.

The catalysed reaction is D-mannonate = 2-dehydro-3-deoxy-D-gluconate + H2O. Its function is as follows. Has low D-mannonate dehydratase activity (in vitro), suggesting that this is not a physiological substrate and that it has no significant role in D-mannonate degradation in vivo. Has no detectable activity with a panel of 70 other acid sugars (in vitro). This is D-galactonate dehydratase family member SSLG_02014 from Streptomyces sp. (strain SPB78).